A 348-amino-acid chain; its full sequence is Rhodopsin (348 aa).

Residue M1 is modified to N-acetylmethionine. At 1–36 the chain is on the extracellular side; the sequence is MNGTEGPNFYVPFSNKTGVVRSPFEFPQYYLAEPWQ. N-linked (GlcNAc...) asparagine glycosylation is found at N2 and N15. A helical transmembrane segment spans residues 37–61; the sequence is FSMLAAYMFLLIVLGFPINFLTLYV. The Cytoplasmic portion of the chain corresponds to 62–73; sequence TVQHKKLRTPLN. The helical transmembrane segment at 74 to 96 threads the bilayer; sequence YILLNLAVADLFMVFGGFTTTLY. Residues 97 to 110 lie on the Extracellular side of the membrane; the sequence is TSLHGYFVFGPTGC. C110 and C187 form a disulfide bridge. Residues 111–133 form a helical membrane-spanning segment; the sequence is NLEGFFATLGGEIALWSLVVLAI. Residues 134-136 carry the 'Ionic lock' involved in activated form stabilization motif; that stretch reads ERY. Residues 134-152 are Cytoplasmic-facing; the sequence is ERYVVVCKPMSNFRFGENH. The chain crosses the membrane as a helical span at residues 153–173; it reads AIMGVGFTWVMALACAAPPLV. The Extracellular portion of the chain corresponds to 174–202; the sequence is GWSRYIPEGMQCSCGIDYYTLKPEVNNES. E201 is a Zn(2+) binding site. Residues 203–224 traverse the membrane as a helical segment; that stretch reads FVIYMFVVHFTIPMIVIFFCYG. Residues 225-252 lie on the Cytoplasmic side of the membrane; it reads QLVFTVKEAAAQQQESATTQKAEKEVTR. The chain crosses the membrane as a helical span at residues 253 to 274; it reads MVIIMVIAFLICWVPYASVAFY. Residues 275–286 are Extracellular-facing; that stretch reads IFTHQGSNFGPI. Q279 provides a ligand contact to Zn(2+). Residues 287–308 form a helical membrane-spanning segment; it reads FMTLPAFFAKAASIYNPVIYIM. Residue K296 is modified to N6-(retinylidene)lysine. Residues 309-348 are Cytoplasmic-facing; sequence MNKQFRTCMITTLCCGKNPLGDDEVSASASKTETSQVAPA. Residues C322 and C323 are each lipidated (S-palmitoyl cysteine). The interval 330–348 is interaction with SAG; sequence DDEVSASASKTETSQVAPA. Phosphoserine occurs at positions 334 and 338. Phosphothreonine occurs at positions 340 and 342. A Phosphoserine modification is found at S343.

This sequence belongs to the G-protein coupled receptor 1 family. Opsin subfamily. Homodimer. May form a complex composed of RHO, GRK1 and RCVRN in a Ca(2+)-dependent manner; RCVRN prevents the interaction between GRK1 and RHO. Interacts with GRK1. Interacts (phosphorylated form) with SAG. Interacts with GNAT1. Interacts with GNAT3. SAG and G-proteins compete for a common binding site. Interacts with PRCD; the interaction promotes PRCD stability. Forms a complex with ASAP1 and ARF4. Forms a complex with ASAP1, RAB11A, Rabin8/RAB3IP, ARF4 and RAB11FIP3; the complex regulates Golgi-to-cilia rhodopsin/RHO transport in photoreceptors. Post-translationally, phosphorylated on some or all of the serine and threonine residues present in the C-terminal region. Contains one covalently linked retinal chromophore. Upon light absorption, the covalently bound 11-cis-retinal is converted to all-trans-retinal. After hydrolysis of the Schiff base and release of the covalently bound all-trans-retinal, active rhodopsin is regenerated by binding of a fresh molecule of 11-cis-retinal.

The protein resides in the membrane. It is found in the cell projection. The protein localises to the cilium. It localises to the photoreceptor outer segment. Functionally, photoreceptor required for image-forming vision at low light intensity. Required for photoreceptor cell viability after birth. Light-induced isomerization of 11-cis to all-trans retinal triggers a conformational change that activates signaling via G-proteins. Subsequent receptor phosphorylation mediates displacement of the bound G-protein alpha subunit by the arrestin SAG and terminates signaling. This chain is Rhodopsin (RHO), found in Phoca vitulina (Harbor seal).